Consider the following 180-residue polypeptide: NADH-quinone oxidoreductase subunit I (180 aa).

4Fe-4S ferredoxin-type domains are found at residues 50 to 80 (LTRD…LQKA) and 90 to 119 (EFFR…MTPD). Cys-60, Cys-63, Cys-66, Cys-70, Cys-99, Cys-102, Cys-105, and Cys-109 together coordinate [4Fe-4S] cluster.

It belongs to the complex I 23 kDa subunit family. As to quaternary structure, NDH-1 is composed of 14 different subunits. Subunits NuoA, H, J, K, L, M, N constitute the membrane sector of the complex. [4Fe-4S] cluster serves as cofactor.

The protein resides in the cell inner membrane. The enzyme catalyses a quinone + NADH + 5 H(+)(in) = a quinol + NAD(+) + 4 H(+)(out). In terms of biological role, NDH-1 shuttles electrons from NADH, via FMN and iron-sulfur (Fe-S) centers, to quinones in the respiratory chain. The immediate electron acceptor for the enzyme in this species is believed to be ubiquinone. Couples the redox reaction to proton translocation (for every two electrons transferred, four hydrogen ions are translocated across the cytoplasmic membrane), and thus conserves the redox energy in a proton gradient. The chain is NADH-quinone oxidoreductase subunit I from Acinetobacter baylyi (strain ATCC 33305 / BD413 / ADP1).